The chain runs to 299 residues: Acetylglutamate kinase (299 aa).

Substrate contacts are provided by residues 62-63 (GG), arginine 84, and asparagine 188.

The protein belongs to the acetylglutamate kinase family. ArgB subfamily.

It is found in the cytoplasm. It carries out the reaction N-acetyl-L-glutamate + ATP = N-acetyl-L-glutamyl 5-phosphate + ADP. It functions in the pathway amino-acid biosynthesis; L-arginine biosynthesis; N(2)-acetyl-L-ornithine from L-glutamate: step 2/4. Functionally, catalyzes the ATP-dependent phosphorylation of N-acetyl-L-glutamate. This Methanosarcina acetivorans (strain ATCC 35395 / DSM 2834 / JCM 12185 / C2A) protein is Acetylglutamate kinase.